The chain runs to 542 residues: CTP synthase (542 aa).

The tract at residues methionine 1–valine 265 is amidoligase domain. Residue serine 13 participates in CTP binding. Residue serine 13 participates in UTP binding. Position 14–19 (serine 14–isoleucine 19) interacts with ATP. Residue tyrosine 54 participates in L-glutamine binding. Aspartate 71 contributes to the ATP binding site. 2 residues coordinate Mg(2+): aspartate 71 and glutamate 140. CTP is bound by residues aspartate 147–glutamate 149, lysine 186–glutamine 191, and lysine 222. UTP is bound by residues lysine 186–glutamine 191 and lysine 222. Residues tyrosine 297–glycine 532 enclose the Glutamine amidotransferase type-1 domain. An L-glutamine-binding site is contributed by glycine 352. Catalysis depends on cysteine 379, which acts as the Nucleophile; for glutamine hydrolysis. L-glutamine contacts are provided by residues tyrosine 380–glutamine 383, glutamate 403, and arginine 460. Active-site residues include histidine 505 and glutamate 507.

The protein belongs to the CTP synthase family. In terms of assembly, homotetramer.

The enzyme catalyses UTP + L-glutamine + ATP + H2O = CTP + L-glutamate + ADP + phosphate + 2 H(+). It catalyses the reaction L-glutamine + H2O = L-glutamate + NH4(+). The catalysed reaction is UTP + NH4(+) + ATP = CTP + ADP + phosphate + 2 H(+). Its pathway is pyrimidine metabolism; CTP biosynthesis via de novo pathway; CTP from UDP: step 2/2. Allosterically activated by GTP, when glutamine is the substrate; GTP has no effect on the reaction when ammonia is the substrate. The allosteric effector GTP functions by stabilizing the protein conformation that binds the tetrahedral intermediate(s) formed during glutamine hydrolysis. Inhibited by the product CTP, via allosteric rather than competitive inhibition. Catalyzes the ATP-dependent amination of UTP to CTP with either L-glutamine or ammonia as the source of nitrogen. Regulates intracellular CTP levels through interactions with the four ribonucleotide triphosphates. This Caldivirga maquilingensis (strain ATCC 700844 / DSM 13496 / JCM 10307 / IC-167) protein is CTP synthase.